The primary structure comprises 1510 residues: Cysteine-tryptophan domain-containing zinc finger protein 5 (1510 aa).

The span at 174-196 (YCQRTSSENDSNHSQQLLNSGPE) shows a compositional bias: polar residues. Disordered regions lie at residues 174–198 (YCQR…PEQK), 449–497 (SSLD…CAKD), 555–574 (KPNY…YVLD), and 582–616 (LHTE…DHKI). Over residues 454 to 465 (GFSHKTKSDKCN) the composition is skewed to basic and acidic residues. Residues 467-476 (QPVTTSSQLQ) are compositionally biased toward polar residues. Basic and acidic residues-rich tracts occupy residues 479-497 (PAKK…CAKD) and 556-574 (PNYD…YVLD). The CW-type zinc-finger motif lies at 645–698 (SEPVDQWVCCDKCETWRLLPYGMNSDTLPKKWRCSMQSWLPGMNNCKLSEGETT). 4 residues coordinate Zn(2+): C654, C657, C678, and C690. Positions 768 to 780 (KQKRIESSDKGEK) are enriched in basic and acidic residues. Disordered stretches follow at residues 768-893 (KQKR…RDLF), 1003-1050 (STAA…LDRH), and 1149-1194 (LPIH…VRPD). Polar residues predominate over residues 781–790 (STVTISSGQT). The span at 874 to 893 (NSDRGARASDAGKSDPRDLF) shows a compositional bias: basic and acidic residues. The segment covering 1003–1016 (STAATSSSSKVSSS) has biased composition (low complexity). 2 stretches are compositionally biased toward polar residues: residues 1026–1040 (TRTS…SPLR) and 1162–1182 (PDQN…QAKL).

Highly expressed in young panicles. Expressed at low levels in leaf sheaths, nodes, internodes and axillary buds.

Its subcellular location is the nucleus. Functionally, binds to histones H3K4me1, H3K4me2 and H3K4me3 in GST pull-down assay. May facilitate the recruitment of effectors to mediate gene expression. In Oryza sativa subsp. japonica (Rice), this protein is Cysteine-tryptophan domain-containing zinc finger protein 5.